Reading from the N-terminus, the 177-residue chain is UPF0200 protein STK_09500 (177 aa).

Position 11 to 18 (11 to 18 (GMPGSGKG)) interacts with ATP.

It belongs to the UPF0200 family.

This chain is UPF0200 protein STK_09500, found in Sulfurisphaera tokodaii (strain DSM 16993 / JCM 10545 / NBRC 100140 / 7) (Sulfolobus tokodaii).